The primary structure comprises 257 residues: Pyridoxine 5'-phosphate synthase (257 aa).

Position 6 (N6) interacts with 3-amino-2-oxopropyl phosphate. 8 to 9 contributes to the 1-deoxy-D-xylulose 5-phosphate binding site; the sequence is DH. R17 is a binding site for 3-amino-2-oxopropyl phosphate. Residue H41 is the Proton acceptor of the active site. 1-deoxy-D-xylulose 5-phosphate is bound by residues R43 and H48. E68 (proton acceptor) is an active-site residue. T98 provides a ligand contact to 1-deoxy-D-xylulose 5-phosphate. Catalysis depends on H210, which acts as the Proton donor. Residues G211 and 232 to 233 contribute to the 3-amino-2-oxopropyl phosphate site; that span reads GQ.

This sequence belongs to the PNP synthase family. As to quaternary structure, homooctamer; tetramer of dimers.

Its subcellular location is the cytoplasm. The enzyme catalyses 3-amino-2-oxopropyl phosphate + 1-deoxy-D-xylulose 5-phosphate = pyridoxine 5'-phosphate + phosphate + 2 H2O + H(+). Its pathway is cofactor biosynthesis; pyridoxine 5'-phosphate biosynthesis; pyridoxine 5'-phosphate from D-erythrose 4-phosphate: step 5/5. Functionally, catalyzes the complicated ring closure reaction between the two acyclic compounds 1-deoxy-D-xylulose-5-phosphate (DXP) and 3-amino-2-oxopropyl phosphate (1-amino-acetone-3-phosphate or AAP) to form pyridoxine 5'-phosphate (PNP) and inorganic phosphate. This Campylobacter jejuni subsp. doylei (strain ATCC BAA-1458 / RM4099 / 269.97) protein is Pyridoxine 5'-phosphate synthase.